A 266-amino-acid polypeptide reads, in one-letter code: Type II iodothyronine deiodinase (266 aa).

Over 1 to 9 (MGLLSVDLL) the chain is Lumenal. A helical; Signal-anchor for type III membrane protein transmembrane segment spans residues 10–34 (ITLQILPVFFSNCLFLALYDSVILL). The Cytoplasmic segment spans residues 35–266 (KHVALLLSRS…KNFSKRUILD (232 aa)). The active site involves Sec-130. 2 non-standard amino acids (selenocysteine) are found at residues Sec-130 and Sec-263.

This sequence belongs to the iodothyronine deiodinase family. In terms of assembly, predominantly monomer. Can form homodimers but homodimerization is not essential for enzyme activity. Interacts with USP20 and USP33. Interacts with MARCHF6. Ubiquitinated by MARCHF6, leading to its degradation by the proteasome. Deubiquitinated by USP20 and USP33. As to expression, expressed in cerebral cortex, cerebellum, pituitary gland, mostly in anterior pituitary gland, and pineal gland, as well as in brown adipose tissue (BAT).

It is found in the endoplasmic reticulum membrane. It carries out the reaction 3,3',5-triiodo-L-thyronine + iodide + A + H(+) = L-thyroxine + AH2. The enzyme catalyses 3,3'-diiodo-L-thyronine + iodide + A + H(+) = 3,3',5'-triiodo-L-thyronine + AH2. The catalysed reaction is 3'-iodo-L-thyronine + iodide + A + H(+) = 3',5'-diiodo-L-thyronine + AH2. It catalyses the reaction 3,3'-diiodothyronamine + iodide + A + H(+) = 3,3',5'-triiodothyronamine + AH2. It carries out the reaction 3'-iodothyronamine + iodide + A + H(+) = 3',5'-diiodothyronamine + AH2. In terms of biological role, plays a crucial role in the metabolism of thyroid hormones (TH) and has specific roles in TH activation and inactivation by deiodination. Catalyzes the deiodination of L-thyroxine (T4) to 3,5,3'-triiodothyronine (T3) and 3',5'-diiodothyronine (3',5'-T2) to 3'-monoiodothyronine (3'-T1) via outer-ring deiodination (ORD). Catalyzes the deiodination of 3,3',5'-triiodothyronine (rT3) to 3,3'-diiodothyronine (3,3'-T2) via ORD. Catalyzes the phenolic ring deiodinations of 3,3',5'-triiodothyronamine and 3',5'- diiodothyronamine. The protein is Type II iodothyronine deiodinase (Dio2) of Rattus norvegicus (Rat).